The sequence spans 264 residues: Ribosome-recycling factor, mitochondrial (264 aa).

Belongs to the RRF family.

The protein localises to the mitochondrion. In terms of biological role, necessary for protein synthesis in mitochondria. Functions as a ribosome recycling factor in mitochondria. The chain is Ribosome-recycling factor, mitochondrial (RRF1) from Yarrowia lipolytica (strain CLIB 122 / E 150) (Yeast).